A 407-amino-acid polypeptide reads, in one-letter code: Guanine nucleotide-binding protein alpha-1 subunit (407 aa).

The N-myristoyl glycine moiety is linked to residue Gly2. Cys3 carries S-palmitoyl cysteine lipidation. Positions Asn73–Phe407 constitute a G-alpha domain. The G1 motif stretch occupies residues Lys76–Thr89. The GTP site is built by Asp84, Ser85, Gly86, Lys87, Thr88, Thr89, Asp190, Leu215, Thr221, Gly243, Asn309, Lys310, Asp312, and Ala380. Position 88 (Thr88) interacts with Mg(2+). Residues Asp213 to Thr221 form a G2 motif region. A Mg(2+)-binding site is contributed by Thr221. Residues Tyr236–Arg245 are G3 motif. The G4 motif stretch occupies residues Ile305 to Asp312. The segment at Thr378–Thr383 is G5 motif.

The protein belongs to the G-alpha family. G(q) subfamily. G proteins are composed of 3 units; alpha, beta and gamma. The alpha chain contains the guanine nucleotide binding site. Mg(2+) is required as a cofactor.

Its function is as follows. Implicated in the mating and sporulation pathway. Probably coupled to mating-factor receptors. May act in concert with Ras1. The protein is Guanine nucleotide-binding protein alpha-1 subunit (gpa1) of Schizosaccharomyces pombe (strain 972 / ATCC 24843) (Fission yeast).